We begin with the raw amino-acid sequence, 124 residues long: MENTNIVKATFDTETLEGQIKIFNAQTGGGQSFKNLPDGTIIEATAIAQYKQVSDTYGDAKEETVTTIFAADGSLYSAISKTVAEAASDLIDLVTRHKLETFKVKVVQGTSSKGNVFFSLQLSL.

It belongs to the phi29likevirus single-strand-binding protein family. In terms of assembly, monomer.

Its function is as follows. Single-stranded DNA binding protein required for the elongation during viral DNA replication by strand displacement. Displaced viral DNA strands are transiently coated with the ssDNA-binding protein and therefore protected againt nucleases. The latter is then probably removed by the replisome that performs lagging strand synthesis or during the events that lead up to the recombination process. Has helix-destabilizing activity since it removes secondary structure from the ssDNA in replicative intermediates. This chain is Single-stranded DNA-binding protein (5), found in Bacillus subtilis (Bacteriophage PZA).